The chain runs to 46 residues: Diuretic hormone (46 aa).

Position 46 is an isoleucine amide (Ile-46).

It belongs to the sauvagine/corticotropin-releasing factor/urotensin I family.

Its subcellular location is the secreted. Regulation of fluid secretion. Stimulates primary urine secretion by Malpighian tubules and causes a dose-dependent stimulation of cAMP levels in the tubules. The sequence is that of Diuretic hormone from Acheta domesticus (House cricket).